Reading from the N-terminus, the 538-residue chain is MPAPTQLFFPLVRNCELSRIYGTACYCHHKHLCCSPPYIPQNRLRYTPHPAYATFCRPRENWWQYTQGRRYASTPQKFYLTPPQVNSILKANEYSFKVPEFDGKNVSSILGFDSNQLPANAPIEDRRSAATCLQTRGMLLGVFDGHAGCACSQAVSERLFYYIAVSLLPHETLLEIENAVESGRALLPILQWHKHPNDYFSKEASKLYFNSLRTYWQELIDLNTGESADIDVKEALINAFKRLDNDISLEAQVGDPNSFLNYLVLRVAFSGATACVAHVDGVDLHVANTGDSRAMLGVQEEDGSWSAVTLSNDHNAQNERELERLKLEHPKNEAKSVVKQDRLLGLLMPFRAFGDVKFKWSIDLQKRVIESGPDQLNDNEYTKFIPPNYHTPPYLTAEPEVTYHRLRPQDKFLVLATDGLWETMHRQDVVRIVGEYLTGMHHQQPIAVGGYKVTLGQMHGLLTERRAKMSSVFEDQNAATHLIRHAVGNNEFGAVDHERLSKMLSLPEELARMYRDDITIIVVQFNSHVVGAYQNQEQ.

Residues 1-71 constitute a mitochondrion transit peptide; the sequence is MPAPTQLFFP…WWQYTQGRRY (71 aa). The region spanning 109-525 is the PPM-type phosphatase domain; sequence ILGFDSNQLP…DDITIIVVQF (417 aa). Mn(2+) contacts are provided by Asp144 and Gly145. Lys202 carries the N6-acetyllysine modification. 2 residues coordinate Mn(2+): Asp418 and Asp516.

The protein belongs to the PP2C family. Heterodimer of a catalytic (PDP1) and a regulatory (PDPR) subunit. The cofactor is Mn(2+). Mg(2+) is required as a cofactor.

It is found in the mitochondrion. The enzyme catalyses O-phospho-L-seryl-[pyruvate dehydrogenase E1 alpha subunit] + H2O = L-seryl-[pyruvate dehydrogenase E1 alpha subunit] + phosphate. Magnesium-dependent and calcium-stimulated. PDP1 activity strongly depends on its Ca(2+)-dependent binding to the lipoyl domain of E2 subunit of component of the pyruvate dehydrogenase complex. Mitochondrial enzyme that catalyzes the dephosphorylation and concomitant reactivation of the alpha subunit of the E1 component of the pyruvate dehydrogenase complex (PDC), thereby stimulating the conversion of pyruvate into acetyl-CoA. This chain is [Pyruvate dehydrogenase [acetyl-transferring]]-phosphatase 1, mitochondrial (Pdp1), found in Mus musculus (Mouse).